Reading from the N-terminus, the 184-residue chain is MSIEKESTNNFVQERLDSLYEIDCKIVSLLDNMSSLFQTYSTPKSSDNDLTEQKDQMKAQTKNIYNAISNVAIGLRKEVKIMDENIGVYNKNKDGIMILPISVDQKNTTLGTKKLNDEIKELNTIVTGEETDGAMNDTNMEATTKQETNINNEDSEKEKQENITAIETKKESSENEDEDFDMIA.

The segment covering 142 to 152 (ATTKQETNINN) has biased composition (polar residues). The tract at residues 142 to 184 (ATTKQETNINNEDSEKEKQENITAIETKKESSENEDEDFDMIA) is disordered. Residues 154 to 173 (DSEKEKQENITAIETKKESS) are compositionally biased toward basic and acidic residues. A compositionally biased stretch (acidic residues) spans 174–184 (ENEDEDFDMIA).

The protein belongs to the Mediator complex subunit 11 family. Component of the Mediator complex.

The protein localises to the nucleus. Component of the Mediator complex, a coactivator involved in the regulated transcription of nearly all RNA polymerase II-dependent genes. Mediator functions as a bridge to convey information from gene-specific regulatory proteins to the basal RNA polymerase II transcription machinery. Mediator is recruited to promoters by direct interactions with regulatory proteins and serves as a scaffold for the assembly of a functional pre-initiation complex with RNA polymerase II and the general transcription factors. The polypeptide is Mediator of RNA polymerase II transcription subunit 11 (MED11) (Debaryomyces hansenii (strain ATCC 36239 / CBS 767 / BCRC 21394 / JCM 1990 / NBRC 0083 / IGC 2968) (Yeast)).